The sequence spans 265 residues: Leucyl/phenylalanyl-tRNA--protein transferase (265 aa).

A disordered region spans residues 244–265 (LDTGPDPASSSVTEISLRPAAP).

This sequence belongs to the L/F-transferase family.

It localises to the cytoplasm. It carries out the reaction N-terminal L-lysyl-[protein] + L-leucyl-tRNA(Leu) = N-terminal L-leucyl-L-lysyl-[protein] + tRNA(Leu) + H(+). The catalysed reaction is N-terminal L-arginyl-[protein] + L-leucyl-tRNA(Leu) = N-terminal L-leucyl-L-arginyl-[protein] + tRNA(Leu) + H(+). The enzyme catalyses L-phenylalanyl-tRNA(Phe) + an N-terminal L-alpha-aminoacyl-[protein] = an N-terminal L-phenylalanyl-L-alpha-aminoacyl-[protein] + tRNA(Phe). Functions in the N-end rule pathway of protein degradation where it conjugates Leu, Phe and, less efficiently, Met from aminoacyl-tRNAs to the N-termini of proteins containing an N-terminal arginine or lysine. The protein is Leucyl/phenylalanyl-tRNA--protein transferase of Methylibium petroleiphilum (strain ATCC BAA-1232 / LMG 22953 / PM1).